The chain runs to 339 residues: DNA repair protein RAD51 homolog 1 (339 aa).

The tract at residues 1–22 (MAMQMQLEASADTSVEEESFGP) is disordered. At A2 the chain carries N-acetylalanine. A Phosphothreonine modification is found at T13. Phosphoserine is present on S14. In terms of domain architecture, HhH spans 48–77 (TVEAVAYAPKKELINIKGISEAKADKILTE). Phosphotyrosine; by ABL1 is present on Y54. Glycyl lysine isopeptide (Lys-Gly) (interchain with G-Cter in ubiquitin) cross-links involve residues K58 and K64. Residue 127 to 134 (GEFRTGKT) participates in ATP binding. Residues 184-257 (DVLDNVAYAR…FLRMLLRLAD (74 aa)) form an interaction with PALB2 region. The short motif at 245-260 (LARFLRMLLRLADEFG) is the Nuclear export signal; masked by the interaction with BRCA2 element. T309 carries the phosphothreonine; by CHEK1 modification.

Belongs to the RecA family. RAD51 subfamily. In terms of assembly, forms linear homooligomers, giving rise to a RAD51 nucleoprotein filament, which is essential for strand-pairing reactions during DNA recombination. Interacts with BRCA1 and either directly or indirectly with p53. Interacts with XRCC3, RAD54L and RAD54B. Interacts with the BCDX2 subcomplex RAD51C:RAD51B. Component of the homologous recombination repair (HR) complex composed of ERCC5/XPG, BRCA2, PALB2, DSS1 and RAD51. Interacts directly with PALB2 which may serve as a scaffold for a HR complex containing PALB2, BRCA2, RAD51C, RAD51 and XRCC3. Interacts with RAD51AP1 and RAD51AP2. Interacts with CHEK1, and this may require prior phosphorylation of CHEK1. Interacts with the MND1-PSMC3IP heterodimer. Found in a complex, at least composed of BLM, RAD51 and SPIDR; the complex formation is mediated by SPIDR. Interacts with SPIDR; the interaction is direct and recruits RAD51 to DNA damage sites. Interacts with FIGNL1 (via N-terminal one-half region); the interaction is direct. Interacts with RAD51AP1 (via C-terminal region); the interaction is direct. Interacts with NABP2, RPA1, PALB2 and RAD51. Interacts with SWI5/C9orf119, and at lower level with SFR1/MEIR5. Interacts with hyperphosphorylated RPA2; this interaction is necessary for efficient recruitment to chromatin in response to DNA damage. Interacts with SWSAP1; involved in homologous recombination repair. Interacts with PARPBP, BRCA2 and RECQL5; these interactions interfere with the formation of the RAD51-DNA homologous recombination structure. Interacts with POLQ; POLQ acts as an inhibitor of homology-recombination repair (HR) pathway by limiting RAD51 accumulation at resected ends. Interacts with POLN. Interacts with FBH1. Interacts with RFWD3. Interacts with the MCM8-MCM9 complex; the interaction recruits RAD51 to DNA damage sites. Component of a multiprotein complex with MEIOB and SPATA22. Interacts with the complex BRME1:HSF2BP:BRCA2. Interacts with HELQ; stimulating HELQ DNA helicase activity and ability to unwing DNA. Interacts with MMS22L; the interaction is direct and promotes recruitment of RAD51 to sites of DNA damage. Interacts with the ATAD5 RFC-like complex. Within the ATAD5 RFC-like complex, interacts with ATAD5 (via N-terminus); the interaction is direct and enhanced under replication stress. Interacts with WDR48; the interaction is enhanced under replication stress. Interacts with DNA helicase ZGRF1; the interaction promotes RAD51 strand exchange activity. Interacts (when phosphorylated) with TOPBP1; interaction takes place following phosphorylation by CK2 and PLK1 and promotes recruitment to DNA damage sites. Interacts with GRB2; this interaction inhibits RAD51 ATPase activity to stabilize RAD51 on stalled replication forks. Post-translationally, ubiquitinated by the SCF(FBH1) E3 ubiquitin ligase complex, regulating RAD51 subcellular location and preventing its association with DNA. Ubiquitinated by RFWD3 in response to DNA damage: ubiquitination leads to degradation by the proteasome, promoting homologous recombination. In terms of processing, phosphorylation of Thr-309 by CHEK1 may enhance association with chromatin at sites of DNA damage and promote DNA repair by homologous recombination. Phosphorylated at Ser-14 by PLK1, triggering phosphorylation at Thr-13 by CK2, thereby promoting interaction with TOPBP1 and recruitment to DNA damage sites during S-phase. Phosphorylation by ABL1 inhibits function. Expressed in the testes (at protein level). Expressed in the brain (at protein level). Expressed in the thymus, spleen, ovary and small intestine.

It localises to the nucleus. Its subcellular location is the cytoplasm. The protein resides in the perinuclear region. The protein localises to the mitochondrion matrix. It is found in the chromosome. It localises to the cytoskeleton. Its subcellular location is the microtubule organizing center. The protein resides in the centrosome. Its function is as follows. Plays an important role in homologous strand exchange, a key step in DNA repair through homologous recombination (HR). Binds to single-stranded DNA in an ATP-dependent manner to form nucleoprotein filaments which are essential for the homology search and strand exchange. Catalyzes the recognition of homology and strand exchange between homologous DNA partners to form a joint molecule between a processed DNA break and the repair template. Recruited to resolve stalled replication forks during replication stress. Part of a PALB2-scaffolded HR complex containing BRCA2 and RAD51C and which is thought to play a role in DNA repair by HR. Plays a role in regulating mitochondrial DNA copy number under conditions of oxidative stress in the presence of RAD51C and XRCC3. Also involved in interstrand cross-link repair. This chain is DNA repair protein RAD51 homolog 1, found in Mus musculus (Mouse).